Consider the following 203-residue polypeptide: uncharacterized protein (203 aa).

Residues His34, Glu97, and His172 each coordinate Fe cation.

The protein belongs to the hemerythrin family.

The protein resides in the mitochondrion. This is an uncharacterized protein from Schizosaccharomyces pombe (strain 972 / ATCC 24843) (Fission yeast).